An 86-amino-acid chain; its full sequence is Small ribosomal subunit protein bS20 (86 aa).

The interval 1–21 is disordered; it reads MANTKSAIKAARKSLRLHDRN.

It belongs to the bacterial ribosomal protein bS20 family.

Binds directly to 16S ribosomal RNA. This chain is Small ribosomal subunit protein bS20, found in Opitutus terrae (strain DSM 11246 / JCM 15787 / PB90-1).